The primary structure comprises 700 residues: Elongation factor G (700 aa).

The tr-type G domain maps to 10–286; sequence NKVRNIGIMA…AVIDYLPNPL (277 aa). Residues 19 to 26, 83 to 87, and 137 to 140 contribute to the GTP site; these read AHIDAGKT, DTPGH, and NKMD.

The protein belongs to the TRAFAC class translation factor GTPase superfamily. Classic translation factor GTPase family. EF-G/EF-2 subfamily.

It is found in the cytoplasm. Catalyzes the GTP-dependent ribosomal translocation step during translation elongation. During this step, the ribosome changes from the pre-translocational (PRE) to the post-translocational (POST) state as the newly formed A-site-bound peptidyl-tRNA and P-site-bound deacylated tRNA move to the P and E sites, respectively. Catalyzes the coordinated movement of the two tRNA molecules, the mRNA and conformational changes in the ribosome. The protein is Elongation factor G of Rhodococcus jostii (strain RHA1).